The primary structure comprises 521 residues: Protein nucleotidyltransferase YdiU (521 aa).

Residues G109, G111, R112, K131, D143, G144, R194, and R201 each contribute to the ATP site. The Proton acceptor role is filled by D270. Mg(2+)-binding residues include N271 and D280. D280 provides a ligand contact to ATP.

Belongs to the SELO family. The cofactor is Mg(2+). Mn(2+) is required as a cofactor.

It catalyses the reaction L-seryl-[protein] + ATP = 3-O-(5'-adenylyl)-L-seryl-[protein] + diphosphate. It carries out the reaction L-threonyl-[protein] + ATP = 3-O-(5'-adenylyl)-L-threonyl-[protein] + diphosphate. The enzyme catalyses L-tyrosyl-[protein] + ATP = O-(5'-adenylyl)-L-tyrosyl-[protein] + diphosphate. The catalysed reaction is L-histidyl-[protein] + UTP = N(tele)-(5'-uridylyl)-L-histidyl-[protein] + diphosphate. It catalyses the reaction L-seryl-[protein] + UTP = O-(5'-uridylyl)-L-seryl-[protein] + diphosphate. It carries out the reaction L-tyrosyl-[protein] + UTP = O-(5'-uridylyl)-L-tyrosyl-[protein] + diphosphate. Nucleotidyltransferase involved in the post-translational modification of proteins. It can catalyze the addition of adenosine monophosphate (AMP) or uridine monophosphate (UMP) to a protein, resulting in modifications known as AMPylation and UMPylation. The protein is Protein nucleotidyltransferase YdiU of Burkholderia thailandensis (strain ATCC 700388 / DSM 13276 / CCUG 48851 / CIP 106301 / E264).